Here is a 204-residue protein sequence, read N- to C-terminus: UPF0215 protein MTH_1316 (204 aa).

It belongs to the UPF0215 family.

This Methanothermobacter thermautotrophicus (strain ATCC 29096 / DSM 1053 / JCM 10044 / NBRC 100330 / Delta H) (Methanobacterium thermoautotrophicum) protein is UPF0215 protein MTH_1316.